The sequence spans 292 residues: Small ribosomal subunit biogenesis GTPase RsgA (292 aa).

The CP-type G domain occupies 65 to 223; sequence KTELIRPTVA…VVDTPGFSSL (159 aa). GTP contacts are provided by residues 114–117 and 165–173; these read NKLD and GPSGVGKST. C247, C252, H254, and C260 together coordinate Zn(2+).

The protein belongs to the TRAFAC class YlqF/YawG GTPase family. RsgA subfamily. As to quaternary structure, monomer. Associates with 30S ribosomal subunit, binds 16S rRNA. It depends on Zn(2+) as a cofactor.

The protein localises to the cytoplasm. In terms of biological role, one of several proteins that assist in the late maturation steps of the functional core of the 30S ribosomal subunit. Helps release RbfA from mature subunits. May play a role in the assembly of ribosomal proteins into the subunit. Circularly permuted GTPase that catalyzes slow GTP hydrolysis, GTPase activity is stimulated by the 30S ribosomal subunit. The sequence is that of Small ribosomal subunit biogenesis GTPase RsgA from Alkaliphilus metalliredigens (strain QYMF).